The primary structure comprises 423 residues: UDP-N-acetylglucosamine 1-carboxyvinyltransferase (423 aa).

Position 21 to 22 (21 to 22 (KN)) interacts with phosphoenolpyruvate. A UDP-N-acetyl-alpha-D-glucosamine-binding site is contributed by R92. The Proton donor role is filled by C116. Position 116 is a 2-(S-cysteinyl)pyruvic acid O-phosphothioketal (C116). The UDP-N-acetyl-alpha-D-glucosamine site is built by D305 and V327.

It belongs to the EPSP synthase family. MurA subfamily.

Its subcellular location is the cytoplasm. It carries out the reaction phosphoenolpyruvate + UDP-N-acetyl-alpha-D-glucosamine = UDP-N-acetyl-3-O-(1-carboxyvinyl)-alpha-D-glucosamine + phosphate. The protein operates within cell wall biogenesis; peptidoglycan biosynthesis. Functionally, cell wall formation. Adds enolpyruvyl to UDP-N-acetylglucosamine. The protein is UDP-N-acetylglucosamine 1-carboxyvinyltransferase of Fervidobacterium nodosum (strain ATCC 35602 / DSM 5306 / Rt17-B1).